Here is a 200-residue protein sequence, read N- to C-terminus: Inducible T-cell costimulator (200 aa).

Residues Met1–Gly20 form the signal peptide. The Extracellular portion of the chain corresponds to Glu21 to Leu144. Asn23 is a glycosylation site (N-linked (GlcNAc...) asparagine). Residues Met30 to Glu133 form the Ig-like V-type domain. Cystine bridges form between Cys42-Cys109 and Cys63-Cys83. N-linked (GlcNAc...) asparagine glycans are attached at residues Asn89 and Asn123. A helical membrane pass occupies residues Pro145 to Phe165. Residues Ser166–Ser200 are Cytoplasmic-facing.

In terms of assembly, homodimer; disulfide-linked. Interacts with ICOSLG. Interacts with PIK3R1. Interacts with TBK1; this interaction is critical for the maturation of T follicular regulatory cells. Post-translationally, N-glycosylated. Expressed on activated T-cells and resting memory T-cells. High expression seen in the thymic medulla and in the germinal centers and T-cell zones of lymph nodes and Peyer patches. Expressed at low levels in the spleen.

It localises to the cell membrane. Functionally, stimulatory receptor expressed in activated or antigen-experienced T-cells that plays an important role in the immune response. Upon binding to its ligand ICOSL expressed on antigen presenting cells (APCs), delivers costimulatory signals that enhances all basic T-cell responses to a foreign antigen, namely proliferation, secretion of lymphokines including IL10, up-regulation of molecules that mediate cell-cell interaction, and effective help for antibody secretion by B-cells. Also acts as a costimulatory receptor critical for the differentiation of T follicular regulatory cells upon immune challenges such as viral infection. Mechanistically, potentiates TCR-induced calcium flux by augmenting PLCG1 activation and actin remodeling. In addition, activates PI3K signaling pathways independently of calcium flux. Essential both for efficient interaction between T and B-cells and for normal antibody responses to T-cell dependent antigens. Prevents the apoptosis of pre-activated T-cells. Plays a critical role in CD40-mediated class switching of immunoglobin isotypes. This is Inducible T-cell costimulator (Icos) from Mus musculus (Mouse).